A 192-amino-acid chain; its full sequence is Ion-translocating oxidoreductase complex subunit B (192 aa).

The interval 1 to 26 (MNAIWIAVAAVSLLGLAFGAILGYAS) is hydrophobic. The 4Fe-4S domain occupies 32–91 (EDDPVVEKIDEILPQSQCGQCGYPGCRPYAEAISCNGEKINRCAPGGEAVMLKIAELLNV). Residues C49, C52, C57, C74, C117, C120, C123, C127, C147, C150, C153, and C157 each coordinate [4Fe-4S] cluster. 4Fe-4S ferredoxin-type domains lie at 108–137 (MVAVIDENNCIGCTKCIQACPVDAIVGATR) and 138–167 (VMHTVMSDLCTGCNLCVDPCPTHCISLQPV).

Belongs to the 4Fe4S bacterial-type ferredoxin family. RnfB subfamily. As to quaternary structure, the complex is composed of six subunits: RsxA, RsxB, RsxC, RsxD, RsxE and RsxG. [4Fe-4S] cluster is required as a cofactor.

It localises to the cell inner membrane. In terms of biological role, part of a membrane-bound complex that couples electron transfer with translocation of ions across the membrane. Required to maintain the reduced state of SoxR. In Shigella boydii serotype 4 (strain Sb227), this protein is Ion-translocating oxidoreductase complex subunit B.